Consider the following 417-residue polypeptide: Serine hydroxymethyltransferase (417 aa).

Residues Leu-121 and 125 to 127 (GHL) contribute to the (6S)-5,6,7,8-tetrahydrofolate site. Residue Lys-229 is modified to N6-(pyridoxal phosphate)lysine. Position 354–356 (354–356 (SPF)) interacts with (6S)-5,6,7,8-tetrahydrofolate.

It belongs to the SHMT family. In terms of assembly, homodimer. Requires pyridoxal 5'-phosphate as cofactor.

The protein resides in the cytoplasm. The catalysed reaction is (6R)-5,10-methylene-5,6,7,8-tetrahydrofolate + glycine + H2O = (6S)-5,6,7,8-tetrahydrofolate + L-serine. The protein operates within one-carbon metabolism; tetrahydrofolate interconversion. It functions in the pathway amino-acid biosynthesis; glycine biosynthesis; glycine from L-serine: step 1/1. Its function is as follows. Catalyzes the reversible interconversion of serine and glycine with tetrahydrofolate (THF) serving as the one-carbon carrier. This reaction serves as the major source of one-carbon groups required for the biosynthesis of purines, thymidylate, methionine, and other important biomolecules. Also exhibits THF-independent aldolase activity toward beta-hydroxyamino acids, producing glycine and aldehydes, via a retro-aldol mechanism. In Azotobacter vinelandii (strain DJ / ATCC BAA-1303), this protein is Serine hydroxymethyltransferase.